Reading from the N-terminus, the 428-residue chain is D-amino acid dehydrogenase (428 aa).

Position 3–17 (3–17) interacts with FAD; it reads VVILGSGVVGVASAY.

This sequence belongs to the DadA oxidoreductase family. Requires FAD as cofactor.

The catalysed reaction is a D-alpha-amino acid + A + H2O = a 2-oxocarboxylate + AH2 + NH4(+). It functions in the pathway amino-acid degradation; D-alanine degradation; NH(3) and pyruvate from D-alanine: step 1/1. In terms of biological role, oxidative deamination of D-amino acids. The sequence is that of D-amino acid dehydrogenase from Burkholderia pseudomallei (strain 1106a).